The chain runs to 128 residues: Large ribosomal subunit protein uL22 (128 aa).

It belongs to the universal ribosomal protein uL22 family. In terms of assembly, part of the 50S ribosomal subunit.

In terms of biological role, this protein binds specifically to 23S rRNA; its binding is stimulated by other ribosomal proteins, e.g. L4, L17, and L20. It is important during the early stages of 50S assembly. It makes multiple contacts with different domains of the 23S rRNA in the assembled 50S subunit and ribosome. Its function is as follows. The globular domain of the protein is located near the polypeptide exit tunnel on the outside of the subunit, while an extended beta-hairpin is found that lines the wall of the exit tunnel in the center of the 70S ribosome. The polypeptide is Large ribosomal subunit protein uL22 (Prochlorococcus marinus (strain MIT 9312)).